Here is a 461-residue protein sequence, read N- to C-terminus: 3-deoxy-D-manno-octulosonic acid transferase (461 aa).

A helical; Signal-anchor transmembrane segment spans residues 2–22 (MLLYYTLSFILLPVYFIIIFI). The RPE1 insert domain occupies 47–88 (SALDFIQMSVNKEGFTDHKTTSYVDMHRNASLMYKLSLERSY). E102 functions as the Proton acceptor in the catalytic mechanism. CMP contacts are provided by residues 306–307 (PR), 347–349 (FGE), and 372–375 (NILE).

Belongs to the glycosyltransferase group 1 family. Glycosyltransferase 30 subfamily.

Its subcellular location is the cell inner membrane. It carries out the reaction lipid IVA (E. coli) + CMP-3-deoxy-beta-D-manno-octulosonate = alpha-Kdo-(2-&gt;6)-lipid IVA (E. coli) + CMP + H(+). The protein operates within bacterial outer membrane biogenesis; LPS core biosynthesis. Functionally, involved in lipopolysaccharide (LPS) biosynthesis. Catalyzes the transfer of 3-deoxy-D-manno-octulosonate (Kdo) residue(s) from CMP-Kdo to lipid IV(A), the tetraacyldisaccharide-1,4'-bisphosphate precursor of lipid A. This is 3-deoxy-D-manno-octulosonic acid transferase (waaA) from Rickettsia prowazekii (strain Madrid E).